Consider the following 214-residue polypeptide: Adenylate kinase (214 aa).

Residue 10–15 (GAGKGT) participates in ATP binding. Residues 30–59 (STGDMLRAAIKAGTELGKQAKAVIDAGQLV) form an NMP region. Residues Thr31, Arg36, 57 to 59 (QLV), 85 to 88 (GFPR), and Gln92 each bind AMP. An LID region spans residues 122–159 (GRRAHLPSGRTYHVVYNPPKVEGKDDVTGEDLVVRDDD). ATP-binding positions include Arg123 and 132–133 (TY). Residues Arg156 and Arg167 each contribute to the AMP site. An ATP-binding site is contributed by Lys200.

Belongs to the adenylate kinase family. Monomer.

It is found in the cytoplasm. It carries out the reaction AMP + ATP = 2 ADP. It participates in purine metabolism; AMP biosynthesis via salvage pathway; AMP from ADP: step 1/1. In terms of biological role, catalyzes the reversible transfer of the terminal phosphate group between ATP and AMP. Plays an important role in cellular energy homeostasis and in adenine nucleotide metabolism. This Vibrio vulnificus (strain CMCP6) protein is Adenylate kinase.